We begin with the raw amino-acid sequence, 387 residues long: S-adenosylmethionine synthase (387 aa).

His-19 is a binding site for ATP. Asp-21 contributes to the Mg(2+) binding site. K(+) is bound at residue Glu-47. Gln-103 contacts L-methionine. The flexible loop stretch occupies residues Gln-103–Leu-113. ATP-binding positions include Asp-167–Lys-169, Arg-233–Phe-234, Asp-242, Arg-248–Lys-249, Ala-265, and Lys-269. Asp-242 is a binding site for L-methionine. Lys-273 contributes to the L-methionine binding site.

This sequence belongs to the AdoMet synthase family. As to quaternary structure, homotetramer; dimer of dimers. Mg(2+) serves as cofactor. It depends on K(+) as a cofactor.

The protein localises to the cytoplasm. It carries out the reaction L-methionine + ATP + H2O = S-adenosyl-L-methionine + phosphate + diphosphate. The protein operates within amino-acid biosynthesis; S-adenosyl-L-methionine biosynthesis; S-adenosyl-L-methionine from L-methionine: step 1/1. Catalyzes the formation of S-adenosylmethionine (AdoMet) from methionine and ATP. The overall synthetic reaction is composed of two sequential steps, AdoMet formation and the subsequent tripolyphosphate hydrolysis which occurs prior to release of AdoMet from the enzyme. This is S-adenosylmethionine synthase from Mycoplasma mycoides subsp. mycoides SC (strain CCUG 32753 / NCTC 10114 / PG1).